We begin with the raw amino-acid sequence, 297 residues long: Formiminotransferase cyclodeaminase-like protein (297 aa).

The interval 2 to 196 is formiminotransferase N-subdomain; sequence LREMLGCCKV…GVVAVGACGW (195 aa). H89 serves as the catalytic For formimidoyltransferase activity. Residue 178–187 participates in folate binding; sequence GPQEVSKAKG.

This sequence belongs to the formiminotransferase family. Expressed constitutively in roots, stems, leaves and flowers.

The protein resides in the golgi apparatus. It is found in the trans-Golgi network. It catalyses the reaction (6S)-5-formyl-5,6,7,8-tetrahydrofolate + L-glutamate = N-formyl-L-glutamate + (6S)-5,6,7,8-tetrahydrofolate + H(+). The catalysed reaction is 5-formimidoyltetrahydrofolate + L-glutamate = N-formimidoyl-L-glutamate + (6S)-5,6,7,8-tetrahydrofolate. Its pathway is one-carbon metabolism; tetrahydrofolate interconversion. Involved in the regulation of root growth. May regulate sorting and/or transportation of trans-Golgi network (TGN) vesicles in root cap peripheral cells, thus influencing the extracellular secretion of mucilage components in the root cap. This is Formiminotransferase cyclodeaminase-like protein from Arabidopsis thaliana (Mouse-ear cress).